Reading from the N-terminus, the 340-residue chain is MRLLERARKEWFMVGIVVAIGAAKLEPSVGVNGGPLKPEITVSYIAVATIFFNSGLSLKTEELTSALVHLRLHLFIQIFTLAFFPAAIWLFLQLLSVTSINEWLLKGLQTVGCMPPPVSSAVILTKAVGGNEAAAIFNSAFGSFLGIVVTPVLLLLFLGSSSSVPFTSIFSQLFMTVVVPLVIGQIVRRYIKDWLERKKPPFGVVSSSVLLMIIYTTFCDTFSNPNIDLDKFSLILILFIIVSVQLSFMLLTFIFSTRNNSGFTPADTVAIIFCSTHKSLTLGIPMLKIVFAGHEHLSLISVPLLIYHPAQILLGSVLVPTIKSWMVSRQKGVKLTRPTV.

At 1–10 (MRLLERARKE) the chain is on the cytoplasmic side. A helical membrane pass occupies residues 11–31 (WFMVGIVVAIGAAKLEPSVGV). Topologically, residues 32 to 37 (NGGPLK) are extracellular. The chain crosses the membrane as a helical span at residues 38 to 58 (PEITVSYIAVATIFFNSGLSL). Residues 59–71 (KTEELTSALVHLR) lie on the Cytoplasmic side of the membrane. A helical transmembrane segment spans residues 72 to 92 (LHLFIQIFTLAFFPAAIWLFL). Residues 93 to 116 (QLLSVTSINEWLLKGLQTVGCMPP) are Extracellular-facing. A helical transmembrane segment spans residues 117-137 (PVSSAVILTKAVGGNEAAAIF). Asparagine 138 is a topological domain (cytoplasmic). Residues 139-159 (SAFGSFLGIVVTPVLLLLFLG) form a helical membrane-spanning segment. Residues 160–163 (SSSS) lie on the Extracellular side of the membrane. The chain crosses the membrane as a helical span at residues 164-184 (VPFTSIFSQLFMTVVVPLVIG). Topologically, residues 185–201 (QIVRRYIKDWLERKKPP) are cytoplasmic. A helical membrane pass occupies residues 202-222 (FGVVSSSVLLMIIYTTFCDTF). Residues 223–234 (SNPNIDLDKFSL) lie on the Extracellular side of the membrane. Residues 235–255 (ILILFIIVSVQLSFMLLTFIF) traverse the membrane as a helical segment. Residues 256–270 (STRNNSGFTPADTVA) are Cytoplasmic-facing. Residues 271–291 (IIFCSTHKSLTLGIPMLKIVF) traverse the membrane as a helical segment. The Extracellular portion of the chain corresponds to 292 to 298 (AGHEHLS). The helical transmembrane segment at 299–319 (LISVPLLIYHPAQILLGSVLV) threads the bilayer. At 320–340 (PTIKSWMVSRQKGVKLTRPTV) the chain is on the cytoplasmic side.

Belongs to the bile acid:sodium symporter (BASS) (TC 2.A.28) family. Expressed in heart, brain, colon, lung, liver, adrenal gland, stomach and ovary. Also expressed weakly in small intestine. Expressed in skeletal tissues.

The protein localises to the cell membrane. The protein resides in the endoplasmic reticulum membrane. It localises to the golgi apparatus membrane. In terms of biological role, involved in teeth and skeletal development. Has an essential role in the biosynthesis and trafficking of glycosaminoglycans and glycoproteins to produce a proper functioning extracellular matrix. Required for extracellular matrix mineralization. Also involved in the regulation of cellular calcium homeostasis. Does not show transport activity towards bile acids or steroid sulfates (including taurocholate, cholate, chenodeoxycholate, estrone-3-sulfate, dehydroepiandrosterone sulfate (DHEAS) and pregnenolone sulfate). In Mus musculus (Mouse), this protein is Sodium/bile acid cotransporter 7 (Slc10a7).